The sequence spans 656 residues: PAN2-PAN3 deadenylation complex subunit pan3 (656 aa).

Disordered stretches follow at residues 1–24 and 75–117; these read MAATRYNSGDLRRQVGSPRAKNRD and SFTP…QQAN. The segment at 24 to 53 adopts a C3H1-type zinc-finger fold; the sequence is DTKETLCRNVVIYGHCRWEDSGCTFNHDQN. Positions 63 to 83 match the PABPC-interacting motif-2 (PAM-2) motif; it reads NSNRRVFNVESPSFTPANQQQ. 2 stretches are compositionally biased toward polar residues: residues 75–96 and 107–117; these read SFTPANQQQSAGKKSTFSSQAA and GTSTPTLQQAN. The tract at residues 251-514 is pseudokinase domain; that stretch reads QLLPNSGLPN…TVETLLGGIT (264 aa). Residues 275–280, arginine 302, 352–359, and 412–413 contribute to the ATP site; these read TRNSTC, DFHPLSET, and SK. Residues 515-553 adopt a coiled-coil conformation; sequence THLANFANFVMQESDEKEFHLMRELENGRIARLMFKLSV. Residues 554-656 form a knob domain region; sequence VNERGDSCGV…SKPSATGATI (103 aa).

The protein belongs to the protein kinase superfamily. PAN3 family. In terms of assembly, homodimer. Forms a heterotrimer with a catalytic subunit par-1/pan2 to form the poly(A)-nuclease (PAN) deadenylation complex. Interacts (via PAM-2 motif) with poly(A)-binding protein pabp-1 (via PABC domain), conferring substrate specificity of the enzyme complex.

The protein resides in the cytoplasm. Its function is as follows. Regulatory subunit of the poly(A)-nuclease (PAN) deadenylation complex, one of two cytoplasmic mRNA deadenylases involved in mRNA turnover. PAN specifically shortens poly(A) tails of RNA and the activity is stimulated by poly(A)-binding protein pabp-1. PAN deadenylation is followed by rapid degradation of the shortened mRNA tails by the CCR4-NOT complex. Deadenylated mRNAs are then degraded by two alternative mechanisms, namely exosome-mediated 3'-5' exonucleolytic degradation, or deadenylation-dependent mRNA decaping and subsequent 5'-3' exonucleolytic degradation by rgb-30/xrn1. May also be involved in post-transcriptional maturation of mRNA poly(A) tails. par-2/pan3 acts as a positive regulator for PAN activity, recruiting the catalytic subunit par-1/pan2 to mRNA via its interaction with RNA and with pabp-1. In Neurospora crassa (strain ATCC 24698 / 74-OR23-1A / CBS 708.71 / DSM 1257 / FGSC 987), this protein is PAN2-PAN3 deadenylation complex subunit pan3 (par-2).